We begin with the raw amino-acid sequence, 159 residues long: Phosphopantetheine adenylyltransferase (159 aa).

Threonine 10 contacts substrate. ATP-binding positions include 10–11 and histidine 18; that span reads TF. The substrate site is built by lysine 42, leucine 73, and arginine 87. Residues 88–90, glutamate 98, and 123–129 contribute to the ATP site; these read GLR and YSYVSGT.

This sequence belongs to the bacterial CoaD family. In terms of assembly, homohexamer. It depends on Mg(2+) as a cofactor.

Its subcellular location is the cytoplasm. It carries out the reaction (R)-4'-phosphopantetheine + ATP + H(+) = 3'-dephospho-CoA + diphosphate. It participates in cofactor biosynthesis; coenzyme A biosynthesis; CoA from (R)-pantothenate: step 4/5. In terms of biological role, reversibly transfers an adenylyl group from ATP to 4'-phosphopantetheine, yielding dephospho-CoA (dPCoA) and pyrophosphate. The protein is Phosphopantetheine adenylyltransferase of Coxiella burnetii (strain CbuK_Q154) (Coxiella burnetii (strain Q154)).